Consider the following 93-residue polypeptide: YcgL domain-containing protein Shal_1837 (93 aa).

One can recognise a YcgL domain in the interval 1–85 (MICAVYKSRR…PVVNLLEQHK (85 aa)).

This chain is YcgL domain-containing protein Shal_1837, found in Shewanella halifaxensis (strain HAW-EB4).